Consider the following 61-residue polypeptide: Large ribosomal subunit protein bL28 (61 aa).

Residues Met-1 to Arg-26 are disordered. A compositionally biased stretch (polar residues) spans Lys-9–Arg-25.

It belongs to the bacterial ribosomal protein bL28 family.

This Limosilactobacillus reuteri (strain DSM 20016) (Lactobacillus reuteri) protein is Large ribosomal subunit protein bL28.